We begin with the raw amino-acid sequence, 468 residues long: Peroxisome proliferator-activated receptor alpha (468 aa).

Residues 99–173 (NIECRICGDK…VGMSHNAIRF (75 aa)) constitute a DNA-binding region (nuclear receptor). NR C4-type zinc fingers lie at residues 102–122 (CRIC…CEGC) and 139–161 (CDRS…FHKC). Residues 239–466 (FVIHDMETLC…HPLLQEIYRD (228 aa)) enclose the NR LBD domain. Residues 304 to 433 (DQVTLLKYGV…PKLLQKMVDL (130 aa)) are required for heterodimerization with RXRA.

The protein belongs to the nuclear hormone receptor family. NR1 subfamily. Heterodimer; with RXRA. This heterodimerization is required for DNA binding and transactivation activity. Interacts with NCOA3 coactivator. Interacts with CITED2; the interaction stimulates its transcriptional activity. Also interacts with PPARBP in vitro. Interacts with AKAP13, LPIN1, PRDM16 and coactivator NCOA6. Interacts with ASXL1 and ASXL2. Interacts with PER2. Interacts with SIRT1; the interaction seems to be modulated by NAD(+) levels. Interacts with CRY1 and CRY2. In hepatocytes, interacts with PAQR3 and HUWE1; the interactions promote PPARA poylubiquitination and HUWE1-mediated degradation. Phosphorylated. Post-translationally, ubiquitinated by E3 ubiquitin-protein ligase HUWE1; leading to proteasomal degradation. Expressed predominantly in liver and kidney.

The protein resides in the nucleus. In terms of biological role, ligand-activated transcription factor. Key regulator of lipid metabolism. Activated by the endogenous ligand 1-palmitoyl-2-oleoyl-sn-glycerol-3-phosphocholine (16:0/18:1-GPC). Activated by oleylethanolamide, a naturally occurring lipid that regulates satiety. Receptor for peroxisome proliferators such as hypolipidemic drugs and fatty acids. Regulates the peroxisomal beta-oxidation pathway of fatty acids. Functions as a transcription activator for the ACOX1 and P450 genes. Transactivation activity requires heterodimerization with RXRA and is antagonized by NR2C2. May be required for the propagation of clock information to metabolic pathways regulated by PER2. The chain is Peroxisome proliferator-activated receptor alpha (Ppara) from Rattus norvegicus (Rat).